The chain runs to 342 residues: Ribosomal RNA small subunit methyltransferase C (342 aa).

This sequence belongs to the methyltransferase superfamily. RsmC family. In terms of assembly, monomer.

Its subcellular location is the cytoplasm. The enzyme catalyses guanosine(1207) in 16S rRNA + S-adenosyl-L-methionine = N(2)-methylguanosine(1207) in 16S rRNA + S-adenosyl-L-homocysteine + H(+). Specifically methylates the guanine in position 1207 of 16S rRNA in the 30S particle. In Shewanella piezotolerans (strain WP3 / JCM 13877), this protein is Ribosomal RNA small subunit methyltransferase C.